Here is a 451-residue protein sequence, read N- to C-terminus: Chromosomal replication initiator protein DnaA (451 aa).

Residues 1–71 (MSEKEIWDKV…QAIIYDVIGY (71 aa)) form a domain I, interacts with DnaA modulators region. Positions 71-112 (YEVKPHFISEDELASYNNVNTQEVQEPQVQHSSIDDKTWGKE) are domain II. A domain III, AAA+ region region spans residues 113 to 329 (QFNMHNTFDT…GALTRLLAYS (217 aa)). Positions 157, 159, 160, and 161 each coordinate ATP. A domain IV, binds dsDNA region spans residues 330–451 (KLQGKPITTE…ENLEKEIRNQ (122 aa)).

It belongs to the DnaA family. Oligomerizes as a right-handed, spiral filament on DNA at oriC.

The protein resides in the cytoplasm. Functionally, plays an essential role in the initiation and regulation of chromosomal replication. ATP-DnaA binds to the origin of replication (oriC) to initiate formation of the DNA replication initiation complex once per cell cycle. Binds the DnaA box (a 9 base pair repeat at the origin) and separates the double-stranded (ds)DNA. Forms a right-handed helical filament on oriC DNA; dsDNA binds to the exterior of the filament while single-stranded (ss)DNA is stabiized in the filament's interior. The ATP-DnaA-oriC complex binds and stabilizes one strand of the AT-rich DNA unwinding element (DUE), permitting loading of DNA polymerase. After initiation quickly degrades to an ADP-DnaA complex that is not apt for DNA replication. Binds acidic phospholipids. This is Chromosomal replication initiator protein DnaA from Staphylococcus epidermidis (strain ATCC 12228 / FDA PCI 1200).